Consider the following 146-residue polypeptide: D-aminoacyl-tRNA deacylase (146 aa).

Residues 137–138 carry the Gly-cisPro motif, important for rejection of L-amino acids motif; the sequence is GP.

Belongs to the DTD family. As to quaternary structure, homodimer.

The protein resides in the cytoplasm. It catalyses the reaction glycyl-tRNA(Ala) + H2O = tRNA(Ala) + glycine + H(+). It carries out the reaction a D-aminoacyl-tRNA + H2O = a tRNA + a D-alpha-amino acid + H(+). In terms of biological role, an aminoacyl-tRNA editing enzyme that deacylates mischarged D-aminoacyl-tRNAs. Also deacylates mischarged glycyl-tRNA(Ala), protecting cells against glycine mischarging by AlaRS. Acts via tRNA-based rather than protein-based catalysis; rejects L-amino acids rather than detecting D-amino acids in the active site. By recycling D-aminoacyl-tRNA to D-amino acids and free tRNA molecules, this enzyme counteracts the toxicity associated with the formation of D-aminoacyl-tRNA entities in vivo and helps enforce protein L-homochirality. This is D-aminoacyl-tRNA deacylase from Bacillus cereus (strain G9842).